A 36-amino-acid chain; its full sequence is Amanexitide proprotein 2 (36 aa).

Positions 1–10 are excised as a propeptide; sequence MSDINATRLP. A cross-link (cyclopeptide (Val-Pro)) is located at residues 11–19; the sequence is VFSLPVFFP. A propeptide spanning residues 20–36 is cleaved from the precursor; it reads FVSDDIQAVLTRGESLC.

Belongs to the MSDIN fungal toxin family. In terms of processing, processed by the macrocyclase-peptidase enzyme POPB to yield a toxic cyclic nonapeptide. POPB first removes 10 residues from the N-terminus. Conformational trapping of the remaining peptide forces the enzyme to release this intermediate rather than proceed to macrocyclization. The enzyme rebinds the remaining peptide in a different conformation and catalyzes macrocyclization of the N-terminal 9 residues. As to expression, expressed in basidiocarps.

Its function is as follows. Cyclic nonapeptide that belongs to the MSDIN-like toxin family responsible for a large number of food poisoning cases and deaths. This chain is Amanexitide proprotein 2, found in Amanita exitialis (Guangzhou destroying angel).